The following is a 36-amino-acid chain: Glucagon-1 (36 aa).

Belongs to the glucagon family.

It localises to the secreted. Its function is as follows. Promotes hydrolysis of glycogen and lipids, and raises the blood sugar level. In Oreochromis niloticus (Nile tilapia), this protein is Glucagon-1 (gcg1).